Consider the following 608-residue polypeptide: Signal transduction histidine-protein kinase AtoS (608 aa).

Over 1-15 the chain is Cytoplasmic; the sequence is MHYMKWIYPRRLRNQ. A helical membrane pass occupies residues 16 to 36; it reads MILMAILMVIVPTLTIGYIVE. Residues 37 to 189 are Periplasmic-facing; it reads TEGRSAVLSE…DIRRQAWKMD (153 aa). The helical transmembrane segment at 190–210 threads the bilayer; the sequence is VRIIIVLTAGLLISLLLIVLF. Residues 211–608 are Cytoplasmic-facing; that stretch reads SRRLSANIDI…PINPQGNQTV (398 aa). One can recognise an HAMP domain in the interval 212–262; sequence RRLSANIDIITDGLSTLAQNIPTRLPQLPGEMGQISQSVNNLAQALRETRT. Positions 260–305 constitute a PAS domain; the sequence is TRTLNDLIIENAADGVIAIDRQGDVTTMNPAAEVITGYQRHELVGQ. The PAC domain maps to 326 to 382; the sequence is HGTEHVALEISFPGRDRTIELSVTTSRIHNTHGEMIGALVIFSDLTARKETQRRMAQ. In terms of domain architecture, Histidine kinase spans 395–602; the sequence is GVAHEVRNPL…TFTLILPINP (208 aa). The residue at position 398 (histidine 398) is a Phosphohistidine; by autocatalysis.

In terms of assembly, homodimer. Autophosphorylated. Each AtoS molecule may phosphorylate its partner within the dimer rather than phosphorylating itself.

It localises to the cell inner membrane. The catalysed reaction is ATP + protein L-histidine = ADP + protein N-phospho-L-histidine.. Its function is as follows. Member of the two-component regulatory system AtoS/AtoC. In the presence of acetoacetate, AtoS/AtoC stimulates the expression of the atoDAEB operon, leading to short chain fatty acid catabolism and activation of the poly-(R)-3-hydroxybutyrate (cPHB) biosynthetic pathway. Also induces the operon in response to spermidine. Involved in the regulation of motility and chemotaxis, via transcriptional induction of the flagellar regulon. AtoS is a membrane-associated kinase that phosphorylates and activates AtoC in response to environmental signals. The chain is Signal transduction histidine-protein kinase AtoS (atoS) from Escherichia coli (strain K12).